The following is a 251-amino-acid chain: MGSKLTCCLGPSGGLNCDCCRPDVGPCHECEIPETVAATAPASTTAKPAKLDLKAKKAQLMQYLSLPKTPKMLKMSKGLDARSKRWLKIIWRRHGIWPLENIGPTEDVQASAHGGVEENMTSDIEIPEAKHDHRPTEDVQVSAHGGVEENITSDIEISEAKHDHHLVEDLSESLSVCLEDFMTSDLSESLSVSLEDFMTSGLSESLSVSLEDLMTPEMAKERYEDYLCWVKMARSRLNEPISSQVLGLLRL.

This is an uncharacterized protein from Homo sapiens (Human).